The sequence spans 539 residues: O-phosphoserine--tRNA(Cys) ligase (539 aa).

Residues 188–190 (HMT), 233–235 (SAS), 275–276 (YY), and asparagine 327 contribute to the substrate site.

This sequence belongs to the class-II aminoacyl-tRNA synthetase family. O-phosphoseryl-tRNA(Cys) synthetase subfamily. In terms of assembly, homotetramer. Interacts with SepCysS.

The enzyme catalyses tRNA(Cys) + O-phospho-L-serine + ATP = O-phospho-L-seryl-tRNA(Cys) + AMP + diphosphate. Its function is as follows. Catalyzes the attachment of O-phosphoserine (Sep) to tRNA(Cys). The protein is O-phosphoserine--tRNA(Cys) ligase of Methanosarcina acetivorans (strain ATCC 35395 / DSM 2834 / JCM 12185 / C2A).